Consider the following 154-residue polypeptide: Myoglobin (154 aa).

The region spanning 2–148 (ELSDQEWKHV…FRNDMASKYK (147 aa)) is the Globin domain. Position 65 (His65) interacts with nitrite. An O2-binding site is contributed by His65. Residue His94 coordinates heme b.

Belongs to the globin family. Monomeric.

It localises to the cytoplasm. The protein resides in the sarcoplasm. The enzyme catalyses Fe(III)-heme b-[protein] + nitric oxide + H2O = Fe(II)-heme b-[protein] + nitrite + 2 H(+). It catalyses the reaction H2O2 + AH2 = A + 2 H2O. In terms of biological role, monomeric heme protein which primary function is to store oxygen and facilitate its diffusion within muscle tissues. Reversibly binds oxygen through a pentacoordinated heme iron and enables its timely and efficient release as needed during periods of heightened demand. Depending on the oxidative conditions of tissues and cells, and in addition to its ability to bind oxygen, it also has a nitrite reductase activity whereby it regulates the production of bioactive nitric oxide. Under stress conditions, like hypoxia and anoxia, it also protects cells against reactive oxygen species thanks to its pseudoperoxidase activity. In Alligator mississippiensis (American alligator), this protein is Myoglobin (MB).